The following is a 443-amino-acid chain: MSSTDSVVAGQAKVSTWRKTDTRWVLGLFGTAIGAGVLFFPISAGIGGLLPIIFMLILAFPIAFFCHRALARLCLSGRSISDNITDTVDQHFGHVGGVVITFLYFFAICPLLWIYGVTITNTFIAFWQHQLLLPAINRGVVALAILLVMAFFIYFGKDLMVKVMGYLVFPFITCLVLISLSLIPYWTSDIFTSFDMHSLSLFGSHGILVTVWLGIAIMVFSFNFSPIVSSFVVSKREEYEADFGREYTEQKCAKIISRASVLMVVVVMFFAFSCLFTLSPQDMAQAKQQNIPILSYLANHFSSLGSGKSTYATVLEYGASIIALVAIFKSFFGHYLGTLEGLNGLIIKFGYHGEKSQAPMKKLNMISMVIIMGSTWVIAYINPNILDLIGAMGAPIIAALLCLLPMYAVWRVPALAKYKGKASNYFVTIIGLLTILNIVYQLM.

11 helical membrane passes run 24-44 (WVLG…PISA), 45-65 (GIGG…IAFF), 95-115 (VGGV…LWIY), 140-160 (VVAL…KDLM), 163-183 (VMGY…LSLI), 207-227 (ILVT…FSPI), 259-279 (ASVL…FTLS), 319-339 (ASII…LGTL), 363-383 (LNMI…YINP), 385-405 (ILDL…CLLP), and 423-443 (SNYF…YQLM).

It belongs to the amino acid/polyamine transporter 2 family. SdaC/TdcC subfamily.

The protein resides in the cell inner membrane. It catalyses the reaction L-threonine(in) + H(+)(in) = L-threonine(out) + H(+)(out). The catalysed reaction is L-serine(in) + H(+)(in) = L-serine(out) + H(+)(out). Involved in the import of threonine and serine into the cell, with the concomitant import of a proton (symport system). This Edwardsiella tarda protein is Threonine/serine transporter TdcC.